The primary structure comprises 591 residues: Aspartate--tRNA ligase (591 aa).

An L-aspartate-binding site is contributed by Glu173. Residues 197–200 are aspartate; it reads QLFK. Arg219 serves as a coordination point for L-aspartate. ATP is bound by residues 219 to 221 and Gln228; that span reads RDE. Residue His448 coordinates L-aspartate. Glu482 is a binding site for ATP. Arg489 provides a ligand contact to L-aspartate. 534–537 provides a ligand contact to ATP; it reads GLDR.

Belongs to the class-II aminoacyl-tRNA synthetase family. Type 1 subfamily. As to quaternary structure, homodimer.

The protein localises to the cytoplasm. The catalysed reaction is tRNA(Asp) + L-aspartate + ATP = L-aspartyl-tRNA(Asp) + AMP + diphosphate. Catalyzes the attachment of L-aspartate to tRNA(Asp) in a two-step reaction: L-aspartate is first activated by ATP to form Asp-AMP and then transferred to the acceptor end of tRNA(Asp). The chain is Aspartate--tRNA ligase from Shewanella sp. (strain ANA-3).